The sequence spans 220 residues: Protein-methionine-sulfoxide reductase heme-binding subunit MsrQ (220 aa).

A run of 6 helical transmembrane segments spans residues 20–40 (LWLL…LGAT), 51–71 (FEHL…LVTP), 86–106 (ALGL…MVLD), 122–142 (PFIT…LTSN), 153–173 (WSSL…HFLM), and 175–195 (VKSW…LLLW).

Belongs to the MsrQ family. As to quaternary structure, heterodimer of a catalytic subunit (MsrP) and a heme-binding subunit (MsrQ). FMN is required as a cofactor. It depends on heme b as a cofactor.

The protein resides in the cell inner membrane. Its function is as follows. Part of the MsrPQ system that repairs oxidized periplasmic proteins containing methionine sulfoxide residues (Met-O), using respiratory chain electrons. Thus protects these proteins from oxidative-stress damage caused by reactive species of oxygen and chlorine generated by the host defense mechanisms. MsrPQ is essential for the maintenance of envelope integrity under bleach stress, rescuing a wide series of structurally unrelated periplasmic proteins from methionine oxidation. MsrQ provides electrons for reduction to the reductase catalytic subunit MsrP, using the quinone pool of the respiratory chain. The chain is Protein-methionine-sulfoxide reductase heme-binding subunit MsrQ from Brucella melitensis biotype 2 (strain ATCC 23457).